A 465-amino-acid chain; its full sequence is Probable Xaa-Pro aminopeptidase pepP (465 aa).

Positions 261, 272, 395, and 435 each coordinate Mn(2+).

The protein belongs to the peptidase M24B family. Requires Mn(2+) as cofactor.

It catalyses the reaction Release of any N-terminal amino acid, including proline, that is linked to proline, even from a dipeptide or tripeptide.. Functionally, catalyzes the removal of a penultimate prolyl residue from the N-termini of peptides. The protein is Probable Xaa-Pro aminopeptidase pepP (pepP) of Talaromyces marneffei (strain ATCC 18224 / CBS 334.59 / QM 7333) (Penicillium marneffei).